Here is a 170-residue protein sequence, read N- to C-terminus: Peptide deformylase (170 aa).

The Fe cation site is built by Cys91 and His133. Residue Glu134 is part of the active site. Residue His137 participates in Fe cation binding.

This sequence belongs to the polypeptide deformylase family. It depends on Fe(2+) as a cofactor.

It catalyses the reaction N-terminal N-formyl-L-methionyl-[peptide] + H2O = N-terminal L-methionyl-[peptide] + formate. Functionally, removes the formyl group from the N-terminal Met of newly synthesized proteins. Requires at least a dipeptide for an efficient rate of reaction. N-terminal L-methionine is a prerequisite for activity but the enzyme has broad specificity at other positions. This Glaesserella parasuis serovar 5 (strain SH0165) (Haemophilus parasuis) protein is Peptide deformylase.